The primary structure comprises 183 residues: Isopentenyl-diphosphate Delta-isomerase (183 aa).

Residues H26 and H33 each coordinate Mn(2+). The 139-residue stretch at 31–169 (PLHFAFSCYV…PFAFSPWMVE (139 aa)) folds into the Nudix hydrolase domain. Residue C68 is part of the active site. C68 serves as a coordination point for Mg(2+). Residue H70 coordinates Mn(2+). Residue E88 coordinates Mg(2+). The Mn(2+) site is built by E118 and E120. E120 is an active-site residue.

Belongs to the IPP isomerase type 1 family. The cofactor is Mg(2+). Mn(2+) is required as a cofactor.

Its subcellular location is the cytoplasm. It carries out the reaction isopentenyl diphosphate = dimethylallyl diphosphate. It functions in the pathway isoprenoid biosynthesis; dimethylallyl diphosphate biosynthesis; dimethylallyl diphosphate from isopentenyl diphosphate: step 1/1. Its function is as follows. Catalyzes the 1,3-allylic rearrangement of the homoallylic substrate isopentenyl (IPP) to its highly electrophilic allylic isomer, dimethylallyl diphosphate (DMAPP). This chain is Isopentenyl-diphosphate Delta-isomerase, found in Corynebacterium diphtheriae (strain ATCC 700971 / NCTC 13129 / Biotype gravis).